The following is a 296-amino-acid chain: L-ornithine N(alpha)-acyltransferase (296 aa).

This sequence belongs to the acetyltransferase family. OlsB subfamily.

The catalysed reaction is a (3R)-hydroxyacyl-[ACP] + L-ornithine = a lyso-ornithine lipid + holo-[ACP] + H(+). It functions in the pathway lipid metabolism. Catalyzes the first step in the biosynthesis of ornithine lipids, which are phosphorus-free membrane lipids. Catalyzes the 3-hydroxyacyl-acyl carrier protein-dependent acylation of ornithine to form lyso-ornithine lipid (LOL). This is L-ornithine N(alpha)-acyltransferase from Rhizobium meliloti (strain 1021) (Ensifer meliloti).